We begin with the raw amino-acid sequence, 463 residues long: Major capsid protein (463 aa).

Belongs to the NCLDV major capsid protein family. Homomultimer.

The protein resides in the virion. Major capsid protein that self assembles to form a T=133 or T=147 icosahedral capsid. The sequence is that of Major capsid protein from Dryophytes versicolor (chameleon treefrog).